The following is a 619-amino-acid chain: Probable Xaa-Pro aminopeptidase P (619 aa).

Mn(2+)-binding residues include aspartate 415, aspartate 426, glutamate 524, and glutamate 538.

It belongs to the peptidase M24B family. Mn(2+) is required as a cofactor.

The enzyme catalyses Release of any N-terminal amino acid, including proline, that is linked to proline, even from a dipeptide or tripeptide.. Functionally, catalyzes the removal of a penultimate prolyl residue from the N-termini of peptides. This is Probable Xaa-Pro aminopeptidase P (AMPP) from Fusarium vanettenii (strain ATCC MYA-4622 / CBS 123669 / FGSC 9596 / NRRL 45880 / 77-13-4) (Fusarium solani subsp. pisi).